The chain runs to 445 residues: Neuropeptide Y receptor type 5 (445 aa).

Residues 1 to 42 (MDLELDEYYNKTLATENNTAATRNSDFPVWDDYKSSVDDLQY) are Extracellular-facing. N-linked (GlcNAc...) asparagine glycans are attached at residues asparagine 10 and asparagine 17. Residues 43 to 63 (FLIGLYTFVSLLGFMGNLLIL) form a helical membrane-spanning segment. Residues 64–77 (MALMKKRNQKTTVN) lie on the Cytoplasmic side of the membrane. Residues 78–98 (FLIGNLAFSDILVVLFCSPFT) form a helical membrane-spanning segment. Over 99–117 (LTSVLLDQWMFGKVMCHIM) the chain is Extracellular. A disulfide bond links cysteine 114 and cysteine 198. A helical transmembrane segment spans residues 118–138 (PFLQCVSVLVSTLILISIAIV). Residues 139–156 (RYHMIKHPISNNLTANHG) lie on the Cytoplasmic side of the membrane. The helical transmembrane segment at 157–177 (YFLIATVWTLGFAICSPLPVF) threads the bilayer. The Extracellular segment spans residues 178–208 (HSLVELQETFGSALLSSRYLCVESWPSDSYR). A helical transmembrane segment spans residues 209 to 229 (IAFTISLLLVQYILPLVCLTV). The Cytoplasmic segment spans residues 230–369 (SHTSVCRSIS…KKRSRSVFYR (140 aa)). A helical membrane pass occupies residues 370-390 (LTILILVFAVSWMPLHLFHVV). At 391-407 (TDFNDNLISNRHFKLVY) the chain is on the extracellular side. Residues 408–428 (CICHLLGMMSCCLNPILYGFL) traverse the membrane as a helical segment. Residues 429 to 445 (NNGIKADLVSLIHCLHM) are Cytoplasmic-facing. The S-palmitoyl cysteine moiety is linked to residue cysteine 442.

It belongs to the G-protein coupled receptor 1 family. As to expression, brain; hypothalamus.

The protein resides in the cell membrane. In terms of biological role, receptor for neuropeptide Y and peptide YY. The activity of this receptor is mediated by G proteins that inhibit adenylate cyclase activity. Seems to be associated with food intake. Could be involved in feeding disorders. The polypeptide is Neuropeptide Y receptor type 5 (NPY5R) (Homo sapiens (Human)).